The following is a 427-amino-acid chain: Piwi protein (427 aa).

The mid domain stretch occupies residues 38-167 (PYEVPSLKYN…VQFVSKLGGK (130 aa)). Positions 110–406 (GIMLVLPEYN…VAGIIANVNR (297 aa)) constitute a Piwi domain. The tract at residues 118 to 124 (YNTPLYY) is binds 5'-phosphorylated end of guide DNA. The segment at 147–148 (RN) is binds target DNA. Positions 150 to 155 (TFYVDN) are binds guide DNA. 2 residues coordinate a divalent metal cation: glutamine 159 and leucine 427. The segment at 168-427 (PWILNVDPEK…RSLQTNPWFL (260 aa)) is PIWI domain.

This sequence belongs to the argonaute family. Short pAgo subfamily. As to quaternary structure, homodimer probably stabilized by DNA. Each subunit is capable of interacting with a DNA molecule. It depends on a divalent metal cation as a cofactor.

In terms of biological role, might play a role in defense against invading genetic elements, using short nucleic acid sequences as guides to bind complementary target strands, resulting in slicing of the target nucleic acid. Binds nucleic acids with decreasing affinity in the following order; ssDNA, ssRNA, dsDNA, RNA-DNA, RNA-RNA. Association of the 5' seed region of the guide strand (nucleotides 2-7) with AfPiwi increases affinity for the corresponding target strand; the greatest increase in affinity is for guide DNA with target RNA. The polypeptide is Piwi protein (Archaeoglobus fulgidus (strain ATCC 49558 / DSM 4304 / JCM 9628 / NBRC 100126 / VC-16)).